A 77-amino-acid polypeptide reads, in one-letter code: Large ribosomal subunit protein eL20 (77 aa).

This sequence belongs to the eukaryotic ribosomal protein eL20 family. Part of the 50S ribosomal subunit. Binds 23S rRNA.

The polypeptide is Large ribosomal subunit protein eL20 (Thermococcus onnurineus (strain NA1)).